The following is a 544-amino-acid chain: Chaperonin GroEL 1 (544 aa).

ATP-binding positions include 29-32, 86-90, Gly413, 476-478, and Asp492; these read TLGP, DGTTT, and NAA. Residues 523-544 form a disordered region; it reads EPVKAPAGGGDMDGMGGMGGMM. The span at 529 to 544 shows a compositional bias: gly residues; it reads AGGGDMDGMGGMGGMM.

The protein belongs to the chaperonin (HSP60) family. In terms of assembly, forms a cylinder of 14 subunits composed of two heptameric rings stacked back-to-back. Interacts with the co-chaperonin GroES.

It localises to the cytoplasm. It carries out the reaction ATP + H2O + a folded polypeptide = ADP + phosphate + an unfolded polypeptide.. In terms of biological role, together with its co-chaperonin GroES, plays an essential role in assisting protein folding. The GroEL-GroES system forms a nano-cage that allows encapsulation of the non-native substrate proteins and provides a physical environment optimized to promote and accelerate protein folding. This chain is Chaperonin GroEL 1, found in Cutibacterium acnes (strain DSM 16379 / KPA171202) (Propionibacterium acnes).